Here is a 687-residue protein sequence, read N- to C-terminus: Glycine--tRNA ligase beta subunit (687 aa).

It belongs to the class-II aminoacyl-tRNA synthetase family. In terms of assembly, tetramer of two alpha and two beta subunits.

It localises to the cytoplasm. It carries out the reaction tRNA(Gly) + glycine + ATP = glycyl-tRNA(Gly) + AMP + diphosphate. The chain is Glycine--tRNA ligase beta subunit from Citrifermentans bemidjiense (strain ATCC BAA-1014 / DSM 16622 / JCM 12645 / Bem) (Geobacter bemidjiensis).